A 277-amino-acid chain; its full sequence is Thymidylate synthase (277 aa).

Position 21 (R21) interacts with dUMP. H51 serves as a coordination point for (6R)-5,10-methylene-5,6,7,8-tetrahydrofolate. 139 to 140 provides a ligand contact to dUMP; sequence RR. Residue C159 is the Nucleophile of the active site. DUMP contacts are provided by residues 179–182, N190, and 220–222; these read RSAD and HIY. D182 is a (6R)-5,10-methylene-5,6,7,8-tetrahydrofolate binding site. A276 contacts (6R)-5,10-methylene-5,6,7,8-tetrahydrofolate.

Belongs to the thymidylate synthase family. Bacterial-type ThyA subfamily. In terms of assembly, homodimer.

The protein localises to the cytoplasm. The enzyme catalyses dUMP + (6R)-5,10-methylene-5,6,7,8-tetrahydrofolate = 7,8-dihydrofolate + dTMP. It functions in the pathway pyrimidine metabolism; dTTP biosynthesis. Functionally, catalyzes the reductive methylation of 2'-deoxyuridine-5'-monophosphate (dUMP) to 2'-deoxythymidine-5'-monophosphate (dTMP) while utilizing 5,10-methylenetetrahydrofolate (mTHF) as the methyl donor and reductant in the reaction, yielding dihydrofolate (DHF) as a by-product. This enzymatic reaction provides an intracellular de novo source of dTMP, an essential precursor for DNA biosynthesis. This is Thymidylate synthase from Roseobacter denitrificans (strain ATCC 33942 / OCh 114) (Erythrobacter sp. (strain OCh 114)).